The chain runs to 144 residues: Peptide methionine sulfoxide reductase MsrB (144 aa).

Residues 5–127 form the MsrB domain; that stretch reads KEEKIKSLNR…NSAALRFIPK (123 aa). The active-site Nucleophile is the C116.

Belongs to the MsrB Met sulfoxide reductase family.

The catalysed reaction is L-methionyl-[protein] + [thioredoxin]-disulfide + H2O = L-methionyl-(R)-S-oxide-[protein] + [thioredoxin]-dithiol. This chain is Peptide methionine sulfoxide reductase MsrB, found in Bacillus velezensis (strain DSM 23117 / BGSC 10A6 / LMG 26770 / FZB42) (Bacillus amyloliquefaciens subsp. plantarum).